The sequence spans 377 residues: MWSGPPQQDEGLPVGLSAISVPWKNLGPSKGNRKSPGGLVEASASWEEAGGEEHPAAAPLDVSRLRSSSMEIREKGSEFLKEELYKAQKELKLKDEECERLCKVRAQLEQELEELTASLFEEAHKMVREANMKQAASEKQLKEAWGKIDMLQAEVTALKTLVITSTPASPNRELHPQLLSPTKAGPRKGHSRQKSTSSLCPVVCPTAGHIPTPDKEGKEVDTTLFAEFQAWRASPTLDKNCPFLERVYREDVGPCLDFTVQELSALVRTAVEDNTLTIEPVASQTLPNVECNNTNTCALSGLARTCHHRIRLGDSDGHYYISPSSRARITAVCNFFTYVRYIQQGLVRQDAEPMFWEIMRLRKGMSLAKLGFFPQEA.

Residues 23–57 (WKNLGPSKGNRKSPGGLVEASASWEEAGGEEHPAA) form a disordered region. A coiled-coil region spans residues 77–128 (SEFLKEELYKAQKELKLKDEECERLCKVRAQLEQELEELTASLFEEAHKMVR). The tract at residues 167–198 (PASPNRELHPQLLSPTKAGPRKGHSRQKSTSS) is disordered. Phosphoserine occurs at positions 169 and 180.

This sequence belongs to the SEC2 family. Interacts with RAB3A and IHPK1 through the coiled-coil domain. This interaction is competitive. IHPK1 kinase activity is not required for this interaction. As to expression, selectively localized to the brain (at protein level).

In terms of biological role, guanine nucleotide exchange factor (GEF) which may activate RAB3A, a GTPase that regulates synaptic vesicle exocytosis. Promotes the exchange of GDP to GTP, converting inactive GDP-bound Rab proteins into their active GTP-bound form. May also activate RAB8A and RAB8B. The polypeptide is Guanine nucleotide exchange factor for Rab-3A (Rab3il1) (Rattus norvegicus (Rat)).